Reading from the N-terminus, the 483-residue chain is Salicylaldehyde dehydrogenase (483 aa).

228–233 (GSTRVG) serves as a coordination point for NAD(+). Residues E250 and C284 contribute to the active site.

Belongs to the aldehyde dehydrogenase family.

The catalysed reaction is salicylaldehyde + NAD(+) + H2O = salicylate + NADH + 2 H(+). It functions in the pathway aromatic compound metabolism; naphthalene degradation. The chain is Salicylaldehyde dehydrogenase (nahF) from Pseudomonas putida (Arthrobacter siderocapsulatus).